The primary structure comprises 610 residues: Elongation factor 4 (610 aa).

The tr-type G domain occupies 11–193 (EKIRNFSIIA…QIVEKVPAPT (183 aa)). GTP-binding positions include 23–28 (DHGKST) and 140–143 (NKID).

It belongs to the TRAFAC class translation factor GTPase superfamily. Classic translation factor GTPase family. LepA subfamily.

It is found in the cell membrane. The catalysed reaction is GTP + H2O = GDP + phosphate + H(+). Required for accurate and efficient protein synthesis under certain stress conditions. May act as a fidelity factor of the translation reaction, by catalyzing a one-codon backward translocation of tRNAs on improperly translocated ribosomes. Back-translocation proceeds from a post-translocation (POST) complex to a pre-translocation (PRE) complex, thus giving elongation factor G a second chance to translocate the tRNAs correctly. Binds to ribosomes in a GTP-dependent manner. This chain is Elongation factor 4, found in Streptococcus suis (strain 98HAH33).